The sequence spans 31 residues: Cyclotide glopa C (31 aa).

Positions 1–31 (GDLPICGETCFEGGNCRIPGCTCVWPFCSKN) form a cross-link, cyclopeptide (Gly-Asn). Cystine bridges form between cysteine 6–cysteine 21, cysteine 10–cysteine 23, and cysteine 16–cysteine 28.

In terms of processing, this is a cyclic peptide.

Functionally, probably participates in a plant defense mechanism. In Gloeospermum pauciflorum, this protein is Cyclotide glopa C.